Reading from the N-terminus, the 411-residue chain is UDP-N-acetylmuramoylalanine--D-glutamate ligase (411 aa).

92–98 (GTDGKST) serves as a coordination point for ATP.

It belongs to the MurCDEF family.

The protein localises to the cytoplasm. It catalyses the reaction UDP-N-acetyl-alpha-D-muramoyl-L-alanine + D-glutamate + ATP = UDP-N-acetyl-alpha-D-muramoyl-L-alanyl-D-glutamate + ADP + phosphate + H(+). The protein operates within cell wall biogenesis; peptidoglycan biosynthesis. Its function is as follows. Cell wall formation. Catalyzes the addition of glutamate to the nucleotide precursor UDP-N-acetylmuramoyl-L-alanine (UMA). This Hydrogenobaculum sp. (strain Y04AAS1) protein is UDP-N-acetylmuramoylalanine--D-glutamate ligase.